The chain runs to 724 residues: Solute carrier organic anion transporter family member 4C1 (724 aa).

The segment at 1–80 is disordered; sequence MQGSKGVENP…PPGSQLSELE (80 aa). Topologically, residues 1-101 are cytoplasmic; it reads MQGSKGVENP…QCLQRCNNPK (101 aa). Residues serine 15 and serine 16 each carry the phosphoserine modification. Threonine 19 carries the phosphothreonine modification. Residues serine 24, serine 26, and serine 28 each carry the phosphoserine modification. Residues 25–46 show a composition bias toward polar residues; the sequence is ASPSQVEVSAVASRNQNGGSQP. The helical transmembrane segment at 102 to 122 threads the bilayer; it reads GFLLHYCLLALTQGIVVNGLV. Topologically, residues 123–141 are extracellular; it reads NISISTIEKRYEMKSSLTG. The chain crosses the membrane as a helical span at residues 142–162; the sequence is LISSSYDISFCVLSLFVSFFG. Over 163–168 the chain is Cytoplasmic; it reads ERGHKP. Residues 169–193 form a helical membrane-spanning segment; that stretch reads RWLAFASFMIGLGALVFSLPHFFSG. At 194–218 the chain is on the extracellular side; sequence RYELGTIFEDTCLTRNSTRCASSTS. The chain crosses the membrane as a helical span at residues 219 to 249; the sequence is LLSNYFYVFVLGQLLLGTGGTPLYTLGTAFI. Residues 250–269 are Cytoplasmic-facing; the sequence is DDSVPTHKSSLYIGIGYSMS. Residues 270–290 form a helical membrane-spanning segment; sequence ILGPAIGYVLGGQLLTMYIDV. The Extracellular segment spans residues 291-306; sequence AMGQSSDLTEDDPRWL. Residues 307-331 form a helical membrane-spanning segment; that stretch reads GAWWIGFLLAWLFAWSLIMPFSCFP. Topologically, residues 332-376 are cytoplasmic; that stretch reads KHLPGTAKIQAGKTSQTHQNNSTSFQHMDENFGKSIKDFPTAVKN. Residues 377–398 form a helical membrane-spanning segment; the sequence is LMRNTVFICLVLSTTSEALVTT. Residues 399–418 lie on the Extracellular side of the membrane; sequence GFATFLPKFIENQFGLTSSF. Residues 419 to 442 traverse the membrane as a helical segment; that stretch reads AATLGGAVLIPGAALGQILGGVLV. Residues 443-446 are Cytoplasmic-facing; it reads SKFK. Residues 447–470 traverse the membrane as a helical segment; it reads MKCKNTMKFALCTSGVALMLSFVF. Residues 471 to 580 lie on the Extracellular side of the membrane; sequence IYAKCENGPF…KTQCSNLPIF (110 aa). Positions 494 to 549 constitute a Kazal-like domain; that stretch reads GNLTAPCNANCNCLRSYYYPLCGSDGVQYFSPCFAGCLNSVSNRKPKAYYNCSCIE. Disulfide bonds link cysteine 500-cysteine 530, cysteine 506-cysteine 526, and cysteine 515-cysteine 547. Residues 581-603 form a helical membrane-spanning segment; that stretch reads LGIFFITVIFTFMAGTPITVSIL. At 604 to 612 the chain is on the cytoplasmic side; sequence RCVNHRQRS. Residues 613–638 form a helical membrane-spanning segment; sequence LALGVQFMLLRLLGTIPGPIIFGVTI. Topologically, residues 639-672 are extracellular; the sequence is DSTCVLWDINECGTKGACWIYDNIRMAHMLVAIS. The chain crosses the membrane as a helical span at residues 673–690; the sequence is VTCKVITIFFNGLAIVLY. Topologically, residues 691 to 724 are cytoplasmic; it reads KPPPPGTEVSFQSQNVVVSTITVEEDLNKIENEG.

Belongs to the organo anion transporter (TC 2.A.60) family. Predominantly expressed in kidney and lung but also weakly expressed in brain. Localizes primarily in the proximal straight tubules, the S3 fraction of the nephron.

It is found in the basolateral cell membrane. Its subcellular location is the apical cell membrane. It carries out the reaction estrone 3-sulfate(out) = estrone 3-sulfate(in). The enzyme catalyses L-thyroxine(out) = L-thyroxine(in). The catalysed reaction is 3,3',5-triiodo-L-thyronine(out) = 3,3',5-triiodo-L-thyronine(in). It catalyses the reaction chenodeoxycholate(out) = chenodeoxycholate(in). It carries out the reaction glycocholate(out) = glycocholate(in). The enzyme catalyses L-homoarginine(in) = L-homoarginine(out). The catalysed reaction is L-arginine(in) = L-arginine(out). It catalyses the reaction N(omega),N(omega)-dimethyl-L-arginine(out) = N(omega),N(omega)-dimethyl-L-arginine(in). In terms of biological role, mediates the transport of organic anions such as steroids (estrone 3-sulfate, chenodeoxycholate, glycocholate) and thyroid hormones (3,3',5-triiodo-L-thyronine (T3), L-thyroxine (T4)), in the kidney. Capable of transporting cAMP and pharmacological substances such as digoxin, ouabain and methotrexate. Transport is independent of sodium, chloride ion, and ATP. Transport activity is stimulated by an acidic extracellular environment due to increased substrate affinity to the transporter. The driving force for this transport activity is currently not known. The role of hydrogencarbonate (HCO3(-), bicarbonate) as the probable counteranion that exchanges for organic anions is still not well defined. Functions as an uptake transporter at the apical membrane, suggesting a role in renal reabsorption. Involved in the renal secretion of the uremic toxin ADMA (N(omega),N(omega)-dimethyl-L-arginine or asymmetrical dimethylarginine), which is associated to cardiovascular events and mortality, and the structurally related amino acids L-arginine and L-homoarginine (a cardioprotective biomarker). Can act bidirectionally, suggesting a dual protective role of this transport protein; exporting L-homoarginine after being synthesized in proximal tubule cells, and mediating uptake of ADMA from the blood into proximal tubule cells where it is degraded by the enzyme dimethylarginine dimethylaminohydrolase 1 (DDAH1). May be involved in sperm maturation by enabling directed movement of organic anions and compounds within or between cells. This ion-transporting process is important to maintain the strict epididymal homeostasis necessary for sperm maturation. May have a role in secretory functions since seminal vesicle epithelial cells are assumed to secrete proteins involved in decapacitation by modifying surface proteins to facilitate the acquisition of the ability to fertilize the egg. In Rattus norvegicus (Rat), this protein is Solute carrier organic anion transporter family member 4C1.